The primary structure comprises 73 residues: Myosin-IB light chain (73 aa).

2 consecutive EF-hand domains span residues 3–38 and 38–73; these read DEKT…GLPM and MTEA…VDES. The Ca(2+) site is built by D16, D18, D20, and E27.

Myosin I is a dimer of a heavy and a light chain. Inability to self-assemble into filaments. Interacts with myoB. Does not interact with myoC or myoD.

Functionally, functions as the light chain for myosin-B. Binds calcium with submicromolar affinity and may sense physiological calcium changes. This chain is Myosin-IB light chain (mlcB), found in Dictyostelium discoideum (Social amoeba).